We begin with the raw amino-acid sequence, 281 residues long: Ribosomal RNA small subunit methyltransferase I (281 aa).

The protein belongs to the methyltransferase superfamily. RsmI family.

It localises to the cytoplasm. It carries out the reaction cytidine(1402) in 16S rRNA + S-adenosyl-L-methionine = 2'-O-methylcytidine(1402) in 16S rRNA + S-adenosyl-L-homocysteine + H(+). Its function is as follows. Catalyzes the 2'-O-methylation of the ribose of cytidine 1402 (C1402) in 16S rRNA. The protein is Ribosomal RNA small subunit methyltransferase I of Pasteurella multocida (strain Pm70).